A 368-amino-acid chain; its full sequence is MATNNIVVLGAGVSGLTTAWLLSKDPSNKITVAAKHMPGDYDIEYCSPWAGANYLPVGAENSRVGQWERATWPHLRDIAQNHPEAGIHFQDTVVYNRTKDQGSTTGQWFSELVKPNPWYGKVLPNFRELSKDELPPGIDNANRFTSVCINTAVYLPWLVGQCRKNGVVFKRAVFKHVAEAANAHHSGQKADLVVNCTGLSSRKLGGVQDNTLLPARGQIVVVRNDPGLMCSISGTDDGDDEVTYMMTRAAGGGTILGGTYQKHNWDSLPDPNLAVRIMKRCIELCPSLVAPGQGIEGLDIIRHGVGLRPVREDGPRIEKELIDGVWVVHNYGHGGYGYQTSFGCATTAVEVVREALQQQKQRRDKARL.

Alanine 11, serine 14, lysine 35, histidine 36, cysteine 46, serine 47, glycine 51, asparagine 53, and phenylalanine 174 together coordinate FAD. Cysteine 230 and cysteine 285 form a disulfide bridge. Residues tyrosine 244, tyrosine 260, and arginine 308 each coordinate (R)-lactate. The anthranilate site is built by tyrosine 244, tyrosine 260, and arginine 308. 5 residues coordinate FAD: arginine 308, glycine 334, glycine 337, tyrosine 338, and glutamine 339. A Microbody targeting signal motif is present at residues 366–368 (ARL).

Belongs to the DAMOX/DASOX family. In terms of assembly, homotetramer. Requires FAD as cofactor. In terms of processing, the disulfide bond might contribute to the high thermal stability of the protein.

The protein localises to the peroxisome matrix. It catalyses the reaction a D-alpha-amino acid + O2 + H2O = a 2-oxocarboxylate + H2O2 + NH4(+). The catalysed reaction is D-alanine + O2 + H2O = pyruvate + H2O2 + NH4(+). The enzyme catalyses D-glutamate + O2 + H2O = H2O2 + 2-oxoglutarate + NH4(+). It carries out the reaction D-serine + O2 + H2O = 3-hydroxypyruvate + H2O2 + NH4(+). It catalyses the reaction D-phenylalanine + O2 + H2O = 3-phenylpyruvate + H2O2 + NH4(+). The catalysed reaction is D-arginine + O2 + H2O = 5-guanidino-2-oxopentanoate + H2O2 + NH4(+). The enzyme catalyses D-methionine + O2 + H2O = 4-methylsulfanyl-2-oxobutanoate + H2O2 + NH4(+). It carries out the reaction D-leucine + O2 + H2O = 4-methyl-2-oxopentanoate + H2O2 + NH4(+). It catalyses the reaction D-lysine + O2 + H2O = 6-amino-2-oxohexanoate + H2O2 + NH4(+). The catalysed reaction is D-valine + O2 + H2O = 3-methyl-2-oxobutanoate + H2O2 + NH4(+). The enzyme catalyses D-histidine + O2 + H2O = 3-(imidazol-5-yl)pyruvate + H2O2 + NH4(+). It carries out the reaction D-glutamine + O2 + H2O = 2-oxoglutaramate + H2O2 + NH4(+). It catalyses the reaction D-isoleucine + O2 + H2O = (R)-3-methyl-2-oxopentanoate + H2O2 + NH4(+). The catalysed reaction is D-allo-isoleucine + O2 + H2O = (S)-3-methyl-2-oxopentanoate + H2O2 + NH4(+). The enzyme catalyses D-threonine + O2 + H2O = (S)-3-hydroxy-2-oxobutanoate + H2O2 + NH4(+). It carries out the reaction D-asparagine + O2 + H2O = 2-oxosuccinamate + H2O2 + NH4(+). It catalyses the reaction D-tryptophan + O2 + H2O = indole-3-pyruvate + H2O2 + NH4(+). The catalysed reaction is D-tyrosine + O2 + H2O = 3-(4-hydroxyphenyl)pyruvate + H2O2 + NH4(+). Its activity is regulated as follows. Partially inhibited by benzoate, crotonate, and D-malate. Catalyzes the oxidative deamination of D-amino acids with broad substrate specificity. Enables the organism to utilize D-amino acids as a source of nutrients. Unusually, has high activity on D-glutamate. This chain is D-amino-acid oxidase, found in Talaromyces emersonii (Thermophilic fungus).